Reading from the N-terminus, the 170-residue chain is M-agglutinin (170 aa).

A signal peptide spans 1–24; the sequence is MNLKKIAIASSVFAGITMALTCHA.

Functionally, this protein is a non-fimbrial hemagglutinin that is specific for blood group M. In Escherichia coli, this protein is M-agglutinin (bmaE).